The chain runs to 397 residues: LIM/homeobox protein Lhx3 (397 aa).

LIM zinc-binding domains lie at 31 to 81 (CAGC…CKDD) and 90 to 144 (CAAC…CKAD). The residue at position 63 (Thr-63) is a Phosphothreonine. Ser-71 bears the Phosphoserine mark. Positions 157-216 (AKRPRTTITAKQLETLKSAYNTSPKPARHVREQLSSETGLDMRVVQVWFQNRRAKEKRLK) form a DNA-binding region, homeobox. Residues 212–397 (EKRLKKDAGR…WLDEVDHAQF (186 aa)) are disordered. Position 227 is a phosphotyrosine (Tyr-227). A phosphoserine mark is found at Ser-234 and Ser-238. Positions 316–331 (GVPPSPAAPQSLPGPQ) are enriched in pro residues.

In terms of assembly, interacts with POU1F1. At neuronal promoters, interacts with LDB1, in motor neurons LDB1 is displaced by ISL1 and a ternary complex is formed in which ISL1 contacts both LHX3 and LDB1; allosteric structural changes in the DNA binding domain of LHX3, induced by the ISL1-LHX3 interaction, may explain differences in sequence specificity of the different complexes. Interacts with LDB2. May interact with CITED2/MRG1.

It localises to the nucleus. In terms of biological role, transcription factor. Recognizes and binds to the consensus sequence motif 5'-AATTAATTA-3' in the regulatory elements of target genes, such as glycoprotein hormones alpha chain CGA and visual system homeobox CHX10, positively modulating transcription; transcription can be co-activated by LDB2. Synergistically enhances transcription from the prolactin promoter in cooperation with POU1F1/Pit-1. Required for the establishment of the specialized cells of the pituitary gland and the nervous system. Involved in the development of interneurons and motor neurons in cooperation with LDB1 and ISL1. The protein is LIM/homeobox protein Lhx3 (LHX3) of Homo sapiens (Human).